The primary structure comprises 747 residues: ATP-dependent DNA helicase Hel308 (747 aa).

Residues glutamine 29 and 47–54 (VPTASGKT) each bind ATP. The Helicase ATP-binding domain maps to 34–200 (DAGVADGESL…WLDAELVDSS (167 aa)). Residues 145–148 (DEVH) carry the DEAH box motif. Residues 234–434 (PTEAVVRETL…REPSMRTHLL (201 aa)) form the Helicase C-terminal domain. The disordered stretch occupies residues 711–747 (AAGHQQPEMDGVTPDADVKESAAAAGTDDGQANLGDF).

The protein belongs to the helicase family. Hel308 subfamily. As to quaternary structure, monomer.

The enzyme catalyses Couples ATP hydrolysis with the unwinding of duplex DNA by translocating in the 3'-5' direction.. It carries out the reaction ATP + H2O = ADP + phosphate + H(+). DNA-dependent ATPase and 3'-5' DNA helicase that may be involved in repair of stalled replication forks. The chain is ATP-dependent DNA helicase Hel308 from Natronomonas pharaonis (strain ATCC 35678 / DSM 2160 / CIP 103997 / JCM 8858 / NBRC 14720 / NCIMB 2260 / Gabara) (Halobacterium pharaonis).